A 466-amino-acid chain; its full sequence is Glutamyl-tRNA reductase (466 aa).

Residues 47-50 (TCNR), S107, 112-114 (EQQ), and Q118 each bind substrate. C48 serves as the catalytic Nucleophile. 194 to 199 (GAGAMS) provides a ligand contact to NADP(+).

It belongs to the glutamyl-tRNA reductase family. In terms of assembly, homodimer.

It catalyses the reaction (S)-4-amino-5-oxopentanoate + tRNA(Glu) + NADP(+) = L-glutamyl-tRNA(Glu) + NADPH + H(+). Its pathway is porphyrin-containing compound metabolism; protoporphyrin-IX biosynthesis; 5-aminolevulinate from L-glutamyl-tRNA(Glu): step 1/2. In terms of biological role, catalyzes the NADPH-dependent reduction of glutamyl-tRNA(Glu) to glutamate 1-semialdehyde (GSA). This chain is Glutamyl-tRNA reductase, found in Corynebacterium efficiens (strain DSM 44549 / YS-314 / AJ 12310 / JCM 11189 / NBRC 100395).